A 690-amino-acid polypeptide reads, in one-letter code: Elongation factor G (690 aa).

One can recognise a tr-type G domain in the interval 8 to 283 (DKYRNIGIMA…AVVDFLPSPL (276 aa)). Residues 17–24 (AHIDAGKT), 81–85 (DTPGH), and 135–138 (NKLD) contribute to the GTP site.

This sequence belongs to the TRAFAC class translation factor GTPase superfamily. Classic translation factor GTPase family. EF-G/EF-2 subfamily.

The protein resides in the cytoplasm. Its function is as follows. Catalyzes the GTP-dependent ribosomal translocation step during translation elongation. During this step, the ribosome changes from the pre-translocational (PRE) to the post-translocational (POST) state as the newly formed A-site-bound peptidyl-tRNA and P-site-bound deacylated tRNA move to the P and E sites, respectively. Catalyzes the coordinated movement of the two tRNA molecules, the mRNA and conformational changes in the ribosome. This chain is Elongation factor G, found in Zymomonas mobilis subsp. mobilis (strain ATCC 31821 / ZM4 / CP4).